A 177-amino-acid polypeptide reads, in one-letter code: Glutamyl-tRNA(Gln) amidotransferase subunit F, mitochondrial (177 aa).

The N-terminal 16 residues, 1-16, are a transit peptide targeting the mitochondrion; it reads MIRINSRGLTVSTRRF. Positions 148 to 177 are disordered; sequence PAKGETQGSFNVANMNPRNRPFATIRSKQG. Residues 153 to 164 show a composition bias toward polar residues; that stretch reads TQGSFNVANMNP.

Belongs to the GatF family. Subunit of the heterotrimeric GatFAB amidotransferase (AdT) complex, composed of A, B and F subunits.

The protein resides in the mitochondrion inner membrane. It carries out the reaction L-glutamyl-tRNA(Gln) + L-glutamine + ATP + H2O = L-glutaminyl-tRNA(Gln) + L-glutamate + ADP + phosphate + H(+). In terms of biological role, allows the formation of correctly charged Gln-tRNA(Gln) through the transamidation of misacylated Glu-tRNA(Gln) in the mitochondria. The reaction takes place in the presence of glutamine and ATP through an activated gamma-phospho-Glu-tRNA(Gln). Required for proper protein synthesis within the mitochondrion. The protein is Glutamyl-tRNA(Gln) amidotransferase subunit F, mitochondrial of Scheffersomyces stipitis (strain ATCC 58785 / CBS 6054 / NBRC 10063 / NRRL Y-11545) (Yeast).